A 564-amino-acid polypeptide reads, in one-letter code: Proline--tRNA ligase (564 aa).

The protein belongs to the class-II aminoacyl-tRNA synthetase family. ProS type 1 subfamily. As to quaternary structure, homodimer.

Its subcellular location is the cytoplasm. The catalysed reaction is tRNA(Pro) + L-proline + ATP = L-prolyl-tRNA(Pro) + AMP + diphosphate. In terms of biological role, catalyzes the attachment of proline to tRNA(Pro) in a two-step reaction: proline is first activated by ATP to form Pro-AMP and then transferred to the acceptor end of tRNA(Pro). As ProRS can inadvertently accommodate and process non-cognate amino acids such as alanine and cysteine, to avoid such errors it has two additional distinct editing activities against alanine. One activity is designated as 'pretransfer' editing and involves the tRNA(Pro)-independent hydrolysis of activated Ala-AMP. The other activity is designated 'posttransfer' editing and involves deacylation of mischarged Ala-tRNA(Pro). The misacylated Cys-tRNA(Pro) is not edited by ProRS. This chain is Proline--tRNA ligase, found in Sulfurihydrogenibium sp. (strain YO3AOP1).